A 116-amino-acid polypeptide reads, in one-letter code: Large ribosomal subunit protein bL19 (116 aa).

This sequence belongs to the bacterial ribosomal protein bL19 family.

This protein is located at the 30S-50S ribosomal subunit interface and may play a role in the structure and function of the aminoacyl-tRNA binding site. The polypeptide is Large ribosomal subunit protein bL19 (Stutzerimonas stutzeri (strain A1501) (Pseudomonas stutzeri)).